A 430-amino-acid chain; its full sequence is Asparagine--tRNA ligase (430 aa).

Belongs to the class-II aminoacyl-tRNA synthetase family. In terms of assembly, homodimer.

The protein resides in the cytoplasm. The enzyme catalyses tRNA(Asn) + L-asparagine + ATP = L-asparaginyl-tRNA(Asn) + AMP + diphosphate + H(+). In Listeria innocua serovar 6a (strain ATCC BAA-680 / CLIP 11262), this protein is Asparagine--tRNA ligase.